The following is a 1074-amino-acid chain: MTSLLKSSPGRRRGGDVESGKSEHADSDSDTFYIPSKNASIERLQQWRKAALVLNASRRFRYTLDLKKEQETREMRQKIRSHAHALLAANRFMDMGRESGVEKTTGPATPAGDFGITPEQLVIMSKDHNSGALEQYGGTQGLANLLKTNPEKGISGDDDDLLKRKTIYGSNTYPRKKGKGFLRFLWDACHDLTLIILMVAAVASLALGIKTEGIKEGWYDGGSIAFAVILVIVVTAVSDYKQSLQFQNLNDEKRNIHLEVLRGGRRVEISIYDIVVGDVIPLNIGNQVPADGVLISGHSLALDESSMTGESKIVNKDANKDPFLMSGCKVADGNGSMLVTGVGVNTEWGLLMASISEDNGEETPLQVRLNGVATFIGSIGLAVAAAVLVILLTRYFTGHTKDNNGGPQFVKGKTKVGHVIDDVVKVLTVAVTIVVVAVPEGLPLAVTLTLAYSMRKMMADKALVRRLSACETMGSATTICSDKTGTLTLNQMTVVESYAGGKKTDTEQLPATITSLVVEGISQNTTGSIFVPEGGGDLEYSGSPTEKAILGWGVKLGMNFETARSQSSILHAFPFNSEKKRGGVAVKTADGEVHVHWKGASEIVLASCRSYIDEDGNVAPMTDDKASFFKNGINDMAGRTLRCVALAFRTYEAEKVPTGEELSKWVLPEDDLILLAIVGIKDPCRPGVKDSVVLCQNAGVKVRMVTGDNVQTARAIALECGILSSDADLSEPTLIEGKSFREMTDAERDKISDKISVMGRSSPNDKLLLVQSLRRQGHVVAVTGDGTNDAPALHEADIGLAMGIAGTEVAKESSDIIILDDNFASVVKVVRWGRSVYANIQKFIQFQLTVNVAALVINVVAAISSGDVPLTAVQLLWVNLIMDTLGALALATEPPTDHLMGRPPVGRKEPLITNIMWRNLLIQAIYQVSVLLTLNFRGISILGLEHEVHEHATRVKNTIIFNAFVLCQAFNEFNARKPDEKNIFKGVIKNRLFMGIIVITLVLQVIIVEFLGKFASTTKLNWKQWLICVGIGVISWPLALVGKFIPVPAAPISNKLKVLKFWGKKKNSSGEGSL.

The disordered stretch occupies residues methionine 1–tyrosine 33. Residues methionine 1–glycine 180 lie on the Cytoplasmic side of the membrane. The span at arginine 13–serine 27 shows a compositional bias: basic and acidic residues. Residues arginine 43–leucine 54 form an interaction with calmodulin region. Residues phenylalanine 181–alanine 201 traverse the membrane as a helical segment. Topologically, residues valine 202 to tyrosine 219 are extracellular. A helical transmembrane segment spans residues aspartate 220–tyrosine 240. Residues lysine 241–leucine 369 lie on the Cytoplasmic side of the membrane. Residues asparagine 370–valine 389 traverse the membrane as a helical segment. Topologically, residues isoleucine 390 to valine 426 are extracellular. Residues leucine 427 to leucine 444 form a helical membrane-spanning segment. Over alanine 445 to isoleucine 840 the chain is Cytoplasmic. The 4-aspartylphosphate intermediate role is filled by aspartate 482. Mg(2+) contacts are provided by aspartate 785 and aspartate 789. A helical transmembrane segment spans residues glutamine 841–valine 859. The Extracellular segment spans residues valine 860–leucine 870. A helical membrane pass occupies residues threonine 871–alanine 891. The Cytoplasmic portion of the chain corresponds to threonine 892 to leucine 911. The chain crosses the membrane as a helical span at residues isoleucine 912–leucine 934. Over asparagine 935–histidine 949 the chain is Extracellular. The chain crosses the membrane as a helical span at residues glutamate 950–asparagine 971. Over glutamate 972–lysine 989 the chain is Cytoplasmic. The helical transmembrane segment at asparagine 990–leucine 1011 threads the bilayer. Residues glycine 1012–asparagine 1021 are Extracellular-facing. A helical transmembrane segment spans residues tryptophan 1022 to lysine 1043. Topologically, residues phenylalanine 1044–leucine 1074 are cytoplasmic.

Belongs to the cation transport ATPase (P-type) (TC 3.A.3) family. Type IIB subfamily.

The protein localises to the cell membrane. The enzyme catalyses Ca(2+)(in) + ATP + H2O = Ca(2+)(out) + ADP + phosphate + H(+). Activated by calmodulin. Its function is as follows. This magnesium-dependent enzyme catalyzes the hydrolysis of ATP coupled with the translocation of calcium from the cytosol out of the cell. This is Calcium-transporting ATPase 8, plasma membrane-type (ACA8) from Arabidopsis thaliana (Mouse-ear cress).